Here is a 545-residue protein sequence, read N- to C-terminus: Chaperonin GroEL 2 (545 aa).

Residues 29–32, 86–90, Gly413, 479–481, and Asp495 contribute to the ATP site; these read TLGP, DGTTT, and NAA.

The protein belongs to the chaperonin (HSP60) family. As to quaternary structure, forms a cylinder of 14 subunits composed of two heptameric rings stacked back-to-back. Interacts with the co-chaperonin GroES.

The protein localises to the cytoplasm. It catalyses the reaction ATP + H2O + a folded polypeptide = ADP + phosphate + an unfolded polypeptide.. In terms of biological role, together with its co-chaperonin GroES, plays an essential role in assisting protein folding. The GroEL-GroES system forms a nano-cage that allows encapsulation of the non-native substrate proteins and provides a physical environment optimized to promote and accelerate protein folding. The polypeptide is Chaperonin GroEL 2 (Prochlorococcus marinus (strain SARG / CCMP1375 / SS120)).